Consider the following 130-residue polypeptide: MARDKTRTTKKKERKNIASGVAHVNSTFNNTKILISDVQGNAISWSSAGTMGFKGSRKSTPYAAQLAAEDAGRKAQDHGVKTLEVEVQGPGSGRESALRALAAVGFNITSIRDVTPIAHNGCRPPKRRRV.

The protein belongs to the universal ribosomal protein uS11 family. Part of the 30S ribosomal subunit. Interacts with proteins S7 and S18. Binds to IF-3.

Functionally, located on the platform of the 30S subunit, it bridges several disparate RNA helices of the 16S rRNA. Forms part of the Shine-Dalgarno cleft in the 70S ribosome. The protein is Small ribosomal subunit protein uS11 of Ruegeria pomeroyi (strain ATCC 700808 / DSM 15171 / DSS-3) (Silicibacter pomeroyi).